The following is a 169-amino-acid chain: Steroid receptor-associated and regulated protein (169 aa).

As to quaternary structure, interacts with 14-3-3 proteins. As to expression, expressed in breast tumors with a higher expression level in estrogen receptor-positive cancers.

May regulate the transcriptional function of androgen and estrogen receptors. This chain is Steroid receptor-associated and regulated protein, found in Homo sapiens (Human).